An 856-amino-acid polypeptide reads, in one-letter code: MLIKKNALSILKIVFPIAVLLFVIYQSKKELTNLSFKRTLMVINGLERTDLFMLVLIGLLAVAAMSLYDYVLKYSLRLSITNGKVFRVSWIANSFNNVLGFGGLAGVGLRMMFYKEHTKDHKALVKGIAWLTSSMLLGLSVFSIFVAARVLPVDEVIHEKPWLWAVVIGFALILPLSLAVSKIKDRKAGDEENADKVKNPIFAYIGASVVEWLMAGTVIYFALFAMGIHADIRYVFGVFVIAAIGGMISLVPGGFGSFDLLFLLGMEQLGYHQEAIVTSIVLYRLAYSFIPFILGLFFAAGDLTENTMKRLETNPRIAPAIETTNVLLVVQRAVLVRILQGSLSLIVFVAGLIVLASVSLPIDRLTVIPHIPRPALLLFNGLSLSSALILLILPIELYKRTKRSYTMAITALVGGFVFSFLKGLNISAIFVLPMIIVLLVLLKKQFVREQASYTLGQLIFAVALFTVALFNYNLIAGFIWDRMKKVLRHEYFVHSTSHITHATIMAIIIVPLFFLIFTVVYHKRTKPIGEKADPERLAAFLNEKGGNALSHLGFLGDKRFYFSSDGNALLLFGKIARRLVVLGDPSGQRESFPLVLEEFLNEAHQKGFSVLFYQIEREDMALYHDFGYNFFKLGEEAYVDLNTFTLTGKKKAGLRAINNRFEREEYTFHVDHPPFSDAFLEELKQISDEWLGSKKEKGFSLGFFDPSYLQKAPIAYMKNAEGEIVAFANVMPMYQEGEISVDLMRYRGDAPNGIMDALFIRMFLWAKEEGCTSFNMGMAPLANVGTAFTSFWSERFAAVIFNNVRYMYSFSGLRAFKEKYKPEWRGKYLAYRKNRSLSVTMFLVTRLIGKSKKDSV.

13 consecutive transmembrane segments (helical) span residues 7-27 (ALSI…IYQS), 51-71 (LFML…YDYV), 88-108 (VSWI…AGVG), 128-148 (IAWL…FVAA), 161-181 (PWLW…LAVS), 208-228 (SVVE…AMGI), 235-255 (VFGV…PGGF), 280-300 (IVLY…FFAA), 342-362 (SLSL…SLPI), 375-395 (ALLL…ILPI), 420-440 (FLKG…VLLV), 459-479 (IFAV…AGFI), and 501-521 (HATI…TVVY).

The protein belongs to the LPG synthase family.

It localises to the cell membrane. The enzyme catalyses L-lysyl-tRNA(Lys) + a 1,2-diacyl-sn-glycero-3-phospho-(1'-sn-glycerol) = a 1,2-diacyl-sn-glycero-3-phospho-1'-(3'-O-L-lysyl)-sn-glycerol + tRNA(Lys). In terms of biological role, catalyzes the transfer of a lysyl group from L-lysyl-tRNA(Lys) to membrane-bound phosphatidylglycerol (PG), which produces lysylphosphatidylglycerol (LPG), one of the components of the bacterial membrane with a positive net charge. LPG synthesis contributes to the resistance to cationic antimicrobial peptides (CAMPs) and likely protects B.subtilis against its own CAMPs and against those produced by competiting microorganisms (bacteriocins). In fact, the modification of anionic phosphatidylglycerol with positively charged L-lysine results in repulsion of the peptides. In Bacillus subtilis (strain 168), this protein is Phosphatidylglycerol lysyltransferase (mprF).